The sequence spans 534 residues: C-22 sterol desaturase ERG5B (534 aa).

Residues 43–61 (IAVTIFAVLIAYDQFMYIW) traverse the membrane as a helical segment. Cysteine 480 contributes to the heme binding site.

It belongs to the cytochrome P450 family. Requires heme as cofactor.

The protein resides in the endoplasmic reticulum membrane. It catalyses the reaction 5-dehydroepisterol + NADPH + O2 + H(+) = ergosta-5,7,22,24(28)-tetraen-3beta-ol + NADP(+) + 2 H2O. It participates in steroid metabolism; ergosterol biosynthesis. In terms of biological role, C-22 sterol desaturase; part of the third module of ergosterol biosynthesis pathway that includes the late steps of the pathway. ERG5A and ERG5B convert 5-dehydroepisterol into ergosta-5,7,22,24(28)-tetraen-3beta-ol by forming the C-22(23) double bond in the sterol side chain. The third module or late pathway involves the ergosterol synthesis itself through consecutive reactions that mainly occur in the endoplasmic reticulum (ER) membrane. Firstly, the squalene synthase ERG9 catalyzes the condensation of 2 farnesyl pyrophosphate moieties to form squalene, which is the precursor of all steroids. Squalene synthase is crucial for balancing the incorporation of farnesyl diphosphate (FPP) into sterol and nonsterol isoprene synthesis. Secondly, squalene is converted into lanosterol by the consecutive action of the squalene epoxidase ERG1 and the lanosterol synthase ERG7. Then, the delta(24)-sterol C-methyltransferase ERG6 methylates lanosterol at C-24 to produce eburicol. Eburicol is the substrate of the sterol 14-alpha demethylase encoded by CYP51A, CYP51B and CYP51C, to yield 4,4,24-trimethyl ergosta-8,14,24(28)-trienol. CYP51B encodes the enzyme primarily responsible for sterol 14-alpha-demethylation, and plays an essential role in ascospore formation. CYP51A encodes an additional sterol 14-alpha-demethylase, induced on ergosterol depletion and responsible for the intrinsic variation in azole sensitivity. The third CYP51 isoform, CYP51C, does not encode a sterol 14-alpha-demethylase, but is required for full virulence on host wheat ears. The C-14 reductase ERG24 then reduces the C14=C15 double bond which leads to 4,4-dimethylfecosterol. A sequence of further demethylations at C-4, involving the C-4 demethylation complex containing the C-4 methylsterol oxidases ERG25, the sterol-4-alpha-carboxylate 3-dehydrogenase ERG26 and the 3-keto-steroid reductase ERG27, leads to the production of fecosterol via 4-methylfecosterol. ERG28 has a role as a scaffold to help anchor ERG25, ERG26 and ERG27 to the endoplasmic reticulum. The C-8 sterol isomerase ERG2 then catalyzes the reaction which results in unsaturation at C-7 in the B ring of sterols and thus converts fecosterol to episterol. The sterol-C5-desaturases ERG3A and ERG3BB then catalyze the introduction of a C-5 double bond in the B ring to produce 5-dehydroepisterol. The C-22 sterol desaturases ERG5A and ERG5B further convert 5-dehydroepisterol into ergosta-5,7,22,24(28)-tetraen-3beta-ol by forming the C-22(23) double bond in the sterol side chain. Finally, ergosta-5,7,22,24(28)-tetraen-3beta-ol is substrate of the C-24(28) sterol reductase ERG4 to produce ergosterol. The protein is C-22 sterol desaturase ERG5B of Gibberella zeae (strain ATCC MYA-4620 / CBS 123657 / FGSC 9075 / NRRL 31084 / PH-1) (Wheat head blight fungus).